The following is a 213-amino-acid chain: RxLR effector protein PexRD1 (213 aa).

Residues 1–19 (MRACNTLLPTAIVLTSCDA) form the signal peptide. A RxLR-dEER motif is present at residues 50–77 (RQLRGFYATENTDPVNNQDTAHEDGEER).

Belongs to the RxLR effector family.

Its subcellular location is the secreted. It is found in the host nucleus. Functionally, effector that enhances P.infestans colonization of Nicotiana benthamiana leaves. This is RxLR effector protein PexRD1 from Phytophthora infestans (strain T30-4) (Potato late blight agent).